The sequence spans 379 residues: Cytochrome b (379 aa).

4 helical membrane passes run 33–53 (FGSL…FLAM), 77–98 (WLIR…FIHV), 113–133 (WNIG…GYVL), and 178–198 (FFAF…VHLL). 2 residues coordinate heme b: H83 and H97. Positions 182 and 196 each coordinate heme b. Residue H201 participates in a ubiquinone binding. Helical transmembrane passes span 226-246 (TKDL…ALFF), 288-308 (LGGV…PLLN), 320-340 (VTQV…WIGG), and 347-367 (FTMI…ILMP).

It belongs to the cytochrome b family. As to quaternary structure, the cytochrome bc1 complex contains 11 subunits: 3 respiratory subunits (MT-CYB, CYC1 and UQCRFS1), 2 core proteins (UQCRC1 and UQCRC2) and 6 low-molecular weight proteins (UQCRH/QCR6, UQCRB/QCR7, UQCRQ/QCR8, UQCR10/QCR9, UQCR11/QCR10 and a cleavage product of UQCRFS1). This cytochrome bc1 complex then forms a dimer. The cofactor is heme b.

Its subcellular location is the mitochondrion inner membrane. Component of the ubiquinol-cytochrome c reductase complex (complex III or cytochrome b-c1 complex) that is part of the mitochondrial respiratory chain. The b-c1 complex mediates electron transfer from ubiquinol to cytochrome c. Contributes to the generation of a proton gradient across the mitochondrial membrane that is then used for ATP synthesis. The polypeptide is Cytochrome b (MT-CYB) (Akodon fumeus (Smoky grass mouse)).